A 106-amino-acid chain; its full sequence is UPF0145 protein PputW619_2377 (106 aa).

It belongs to the UPF0145 family.

The polypeptide is UPF0145 protein PputW619_2377 (Pseudomonas putida (strain W619)).